The primary structure comprises 179 residues: Segregation and condensation protein B (179 aa).

This sequence belongs to the ScpB family. Homodimer. Homodimerization may be required to stabilize the binding of ScpA to the Smc head domains. Component of a cohesin-like complex composed of ScpA, ScpB and the Smc homodimer, in which ScpA and ScpB bind to the head domain of Smc. The presence of the three proteins is required for the association of the complex with DNA.

It localises to the cytoplasm. Functionally, participates in chromosomal partition during cell division. May act via the formation of a condensin-like complex containing Smc and ScpA that pull DNA away from mid-cell into both cell halves. The chain is Segregation and condensation protein B from Staphylococcus haemolyticus (strain JCSC1435).